Consider the following 196-residue polypeptide: RNA-free ribonuclease P (196 aa).

It belongs to the HARP family.

It catalyses the reaction Endonucleolytic cleavage of RNA, removing 5'-extranucleotides from tRNA precursor.. RNA-free RNase P that catalyzes the removal of the 5'-leader sequence from pre-tRNA to produce the mature 5'-terminus. The sequence is that of RNA-free ribonuclease P from Thermodesulfovibrio yellowstonii (strain ATCC 51303 / DSM 11347 / YP87).